The following is a 304-amino-acid chain: DCN1-like protein 3 (304 aa).

Disordered regions lie at residues 1–87 (MGQC…EESS) and 284–304 (EVEGRGTLSSGQEGLCPEEQT). Gly-2 carries the N-myristoyl glycine lipid modification. Residues 86 to 278 (SSLQRLEELF…LFDTFVEWEM (193 aa)) form the DCUN1 domain.

As to quaternary structure, part of a complex containing DCUN1D3, CUL3 and RBX1. Interacts (via the DCUN1 domain) with the unneddylated cullins: interacts with CUL1, CUL2, CUL3, CUL4A, CUL4B and CUL5; these interactions promote the cullin neddylation and the identity of the cullin dictates the affinity of the interaction. Interacts preferentially with CUL3; this interaction triggers the relocalization of CUL3 to the cell membrane where CUL3 is neddylated. Interacts (via DCUN1 domain) with RBX1. May also interact with regulators or subunits of cullin-RING ligases such as RNF7, ELOB and DDB1; these interactions are bridged by cullins. Interacts (via DCUN1 domain) with CAND1; this interaction is bridged by cullins and strongly inhibits cullin neddylation. These CAND-cullin-DCNL complexes can only be neddylated in the presence of a substrate adapter. Interacts (via DCUN1 domain) with the N-terminally acetylated form of UBE2M and UBE2F. In terms of tissue distribution, highest levels of expression are in the testis. Very low levels of expression in the heart, brain, skeletal muscle, kidney, liver, spleen, lung and ovary.

The protein resides in the cell membrane. It is found in the cytoplasm. The protein localises to the nucleus. It localises to the perinuclear region. In terms of biological role, contributes to the neddylation of all cullins by transferring NEDD8 from N-terminally acetylated NEDD8-conjugating E2s enzyme to different cullin C-terminal domain-RBX complexes and may play a role in the cell cycle progression by regulating the SCF ubiquitin E3 ligase complex, after UV damage. At the cell membrane, can promote and as well inhibit cullins neddylation. This chain is DCN1-like protein 3, found in Mus musculus (Mouse).